A 430-amino-acid polypeptide reads, in one-letter code: Dye-decolorizing peroxidase Tfu_3078 (430 aa).

A signal peptide (tat-type signal) is located at residues 1 to 39 (MTEPDTERKGSSRRGFLAGLGAAALTGAGIGMAAGEVLR). Residues 42–75 (LPDSDPAASPEAEQRLRMAAQRADATAAPQPGIS) form a disordered region. Residues 60–69 (AAQRADATAA) are compositionally biased toward low complexity. Catalysis depends on Asp-242, which acts as the Proton acceptor. Heme is bound at residue His-338.

The protein belongs to the DyP-type peroxidase family. As to quaternary structure, monomer. It depends on heme b as a cofactor. In terms of processing, exported by the Tat system. The position of the signal peptide cleavage has not been experimentally proven.

It localises to the secreted. It carries out the reaction Reactive Blue 5 + 2 H2O2 = 2,2'-disulfonyl azobenzene + 3-[(4-amino-6-chloro-1,3,5-triazin-2-yl)amino]benzenesulfonate + phthalate + 2 H2O + 2 H(+). Functionally, peroxidase that is able to convert a large number of compounds, but its physiological substrate is not known. Shows high reactivity towards anthraquinone dyes (e.g. Reactive Blue 19) and a modest activity towards standard peroxidase substrates (such as guaiacol and 2,6-dimethoxyphenol) and azo dyes (e.g. Reactive Blue 5). Is also able to oxidize aromatic sulfides enantioselectively, resulting in the corresponding (R)-sulfoxides, but with a poor efficiency. Does not display catalase activity. This is Dye-decolorizing peroxidase Tfu_3078 from Thermobifida fusca (strain YX).